A 109-amino-acid polypeptide reads, in one-letter code: uncharacterized protein (109 aa).

The protein to E.coli YtfG C-terminal region.

This is an uncharacterized protein from Haemophilus influenzae (strain ATCC 51907 / DSM 11121 / KW20 / Rd).